The following is a 750-amino-acid chain: Catalase-peroxidase (750 aa).

Residues 112–235 (WHSAGTYRIG…LGAAHMGLIY (124 aa)) constitute a cross-link (tryptophyl-tyrosyl-methioninium (Trp-Tyr) (with M-261)). His-113 functions as the Proton acceptor in the catalytic mechanism. A cross-link (tryptophyl-tyrosyl-methioninium (Tyr-Met) (with W-112)) is located at residues 235-261 (YVNPEGHNGNPDPVEAASYIRETFGRM). His-276 is a heme b binding site.

It belongs to the peroxidase family. Peroxidase/catalase subfamily. As to quaternary structure, homodimer or homotetramer. Requires heme b as cofactor. Post-translationally, formation of the three residue Trp-Tyr-Met cross-link is important for the catalase, but not the peroxidase activity of the enzyme.

It carries out the reaction H2O2 + AH2 = A + 2 H2O. It catalyses the reaction 2 H2O2 = O2 + 2 H2O. In terms of biological role, bifunctional enzyme with both catalase and broad-spectrum peroxidase activity. This Christiangramia forsetii (strain DSM 17595 / CGMCC 1.15422 / KT0803) (Gramella forsetii) protein is Catalase-peroxidase.